The chain runs to 1331 residues: DNA-directed RNA polymerase subunit beta' (1331 aa).

Residues C60, C62, C75, and C78 each coordinate Zn(2+). Mg(2+) contacts are provided by D535, D537, and D539. Zn(2+)-binding residues include C902, C979, C986, and C989.

This sequence belongs to the RNA polymerase beta' chain family. The RNAP catalytic core consists of 2 alpha, 1 beta, 1 beta' and 1 omega subunit. When a sigma factor is associated with the core the holoenzyme is formed, which can initiate transcription. Requires Mg(2+) as cofactor. Zn(2+) serves as cofactor.

It catalyses the reaction RNA(n) + a ribonucleoside 5'-triphosphate = RNA(n+1) + diphosphate. In terms of biological role, DNA-dependent RNA polymerase catalyzes the transcription of DNA into RNA using the four ribonucleoside triphosphates as substrates. The chain is DNA-directed RNA polymerase subunit beta' from Corynebacterium aurimucosum (strain ATCC 700975 / DSM 44827 / CIP 107346 / CN-1) (Corynebacterium nigricans).